Here is a 617-residue protein sequence, read N- to C-terminus: Protein fem-1 homolog C (617 aa).

ANK repeat units lie at residues 2–31 (DLKTAVFNAARDGKLRLLSKLLENKAKDDV), 40–70 (NGATPLLMAARYGHLDMVDYLLDQCSASVEI), 82–111 (EGAPPLWAASAAGHLKVVRSLLVHGASVNN), 115–144 (TNSTPLRAACFDGHLEIVKYLVEHKADLEV), 148–177 (HGHTCLMISCYKGHKEIAQFLLEKGADVNR), 181–210 (KGNTALHDCAESGSLEIMQMLLKYGARMEK), and 213–242 (YGMTPLLSASVTGHTNIVDFLTQNPQTSKN). TPR repeat units lie at residues 245–279 (INALELLGATFVDKKRDLLGALKYWKRAMDMRHSD) and 338–371 (SYYIRYRGAVYADSGNFKRCINLWKYALDMQQNN). 2 ANK repeats span residues 481 to 523 (NNFS…DVNV) and 527 to 556 (EQNSPLHVAALNNHPDIMNLLVKSGAHFDS).

The protein belongs to the fem-1 family. As to quaternary structure, component of a CRL2 E3 ubiquitin-protein ligase complex, also named ECS (Elongin BC-CUL2/5-SOCS-box protein) complex.

The protein operates within protein modification; protein ubiquitination. Substrate-recognition component of a Cul2-RING (CRL2) E3 ubiquitin-protein ligase complex of the DesCEND (destruction via C-end degrons) pathway, which recognizes a C-degron located at the extreme C terminus of target proteins, leading to their ubiquitination and degradation. The C-degron recognized by the DesCEND pathway is usually a motif of less than ten residues and can be present in full-length proteins, truncated proteins or proteolytically cleaved forms. The CRL2(FEM1C) complex specifically recognizes proteins with an arginine at the C-terminus: recognizes and binds proteins ending with -Lys/Arg-Xaa-Arg and -Lys/Arg-Xaa-Xaa-Arg C-degrons, leading to their ubiquitination and degradation. The polypeptide is Protein fem-1 homolog C (Xenopus laevis (African clawed frog)).